Consider the following 39-residue polypeptide: Photosystem II reaction center protein L (39 aa).

Residues 18 to 38 form a helical membrane-spanning segment; that stretch reads SLYLGLLLIAVLGILFSSYFF.

This sequence belongs to the PsbL family. PSII is composed of 1 copy each of membrane proteins PsbA, PsbB, PsbC, PsbD, PsbE, PsbF, PsbH, PsbI, PsbJ, PsbK, PsbL, PsbM, PsbT, PsbX, PsbY, PsbZ, Psb30/Ycf12, peripheral proteins PsbO, CyanoQ (PsbQ), PsbU, PsbV and a large number of cofactors. It forms dimeric complexes.

It is found in the cellular thylakoid membrane. One of the components of the core complex of photosystem II (PSII). PSII is a light-driven water:plastoquinone oxidoreductase that uses light energy to abstract electrons from H(2)O, generating O(2) and a proton gradient subsequently used for ATP formation. It consists of a core antenna complex that captures photons, and an electron transfer chain that converts photonic excitation into a charge separation. This subunit is found at the monomer-monomer interface and is required for correct PSII assembly and/or dimerization. In Crocosphaera subtropica (strain ATCC 51142 / BH68) (Cyanothece sp. (strain ATCC 51142)), this protein is Photosystem II reaction center protein L.